A 520-amino-acid polypeptide reads, in one-letter code: 2-isopropylmalate synthase (520 aa).

One can recognise a Pyruvate carboxyltransferase domain in the interval 12–274; the sequence is IRIFDTTLRD…DSAINTPRIV (263 aa). The Mn(2+) site is built by Asp-21, His-209, His-211, and Asn-245. The interval 396–520 is regulatory domain; that stretch reads RLASMTISDV…VVAGKTAAVA (125 aa).

It belongs to the alpha-IPM synthase/homocitrate synthase family. LeuA type 1 subfamily. Homodimer. The cofactor is Mn(2+).

It is found in the cytoplasm. The catalysed reaction is 3-methyl-2-oxobutanoate + acetyl-CoA + H2O = (2S)-2-isopropylmalate + CoA + H(+). The protein operates within amino-acid biosynthesis; L-leucine biosynthesis; L-leucine from 3-methyl-2-oxobutanoate: step 1/4. Functionally, catalyzes the condensation of the acetyl group of acetyl-CoA with 3-methyl-2-oxobutanoate (2-ketoisovalerate) to form 3-carboxy-3-hydroxy-4-methylpentanoate (2-isopropylmalate). This Xanthomonas euvesicatoria pv. vesicatoria (strain 85-10) (Xanthomonas campestris pv. vesicatoria) protein is 2-isopropylmalate synthase.